A 368-amino-acid chain; its full sequence is 3-isopropylmalate dehydrogenase (368 aa).

79 to 91 (GPEWGTSSTVRPE) contributes to the NAD(+) binding site. Residues arginine 98, arginine 108, arginine 137, and aspartate 226 each coordinate substrate. Positions 226, 251, and 255 each coordinate Mg(2+). An NAD(+)-binding site is contributed by 291-303 (GSAPDISGKGIVN).

It belongs to the isocitrate and isopropylmalate dehydrogenases family. In terms of assembly, homodimer. Requires Mg(2+) as cofactor. Mn(2+) serves as cofactor.

The protein resides in the cytoplasm. It catalyses the reaction (2R,3S)-3-isopropylmalate + NAD(+) = 4-methyl-2-oxopentanoate + CO2 + NADH. It participates in amino-acid biosynthesis; L-leucine biosynthesis; L-leucine from 3-methyl-2-oxobutanoate: step 3/4. Catalyzes the oxidation of 3-carboxy-2-hydroxy-4-methylpentanoate (3-isopropylmalate) to 3-carboxy-4-methyl-2-oxopentanoate. The product decarboxylates to 4-methyl-2 oxopentanoate. The polypeptide is 3-isopropylmalate dehydrogenase (LEU1) (Sordaria macrospora).